The sequence spans 508 residues: Probable cytosol aminopeptidase (508 aa).

Mn(2+)-binding residues include lysine 276 and aspartate 281. Lysine 288 is a catalytic residue. Aspartate 299, aspartate 358, and glutamate 360 together coordinate Mn(2+). Arginine 362 is an active-site residue.

This sequence belongs to the peptidase M17 family. Requires Mn(2+) as cofactor.

It localises to the cytoplasm. It catalyses the reaction Release of an N-terminal amino acid, Xaa-|-Yaa-, in which Xaa is preferably Leu, but may be other amino acids including Pro although not Arg or Lys, and Yaa may be Pro. Amino acid amides and methyl esters are also readily hydrolyzed, but rates on arylamides are exceedingly low.. It carries out the reaction Release of an N-terminal amino acid, preferentially leucine, but not glutamic or aspartic acids.. Its function is as follows. Presumably involved in the processing and regular turnover of intracellular proteins. Catalyzes the removal of unsubstituted N-terminal amino acids from various peptides. The sequence is that of Probable cytosol aminopeptidase from Chlorobium luteolum (strain DSM 273 / BCRC 81028 / 2530) (Pelodictyon luteolum).